Reading from the N-terminus, the 2617-residue chain is DNA-directed RNA polymerase subunit beta'' (2617 aa).

Zn(2+) is bound by residues Cys-263, Cys-334, Cys-341, and Cys-344.

This sequence belongs to the RNA polymerase beta' chain family. RpoC2 subfamily. In terms of assembly, in plastids the minimal PEP RNA polymerase catalytic core is composed of four subunits: alpha, beta, beta', and beta''. When a (nuclear-encoded) sigma factor is associated with the core the holoenzyme is formed, which can initiate transcription. Requires Zn(2+) as cofactor.

The protein localises to the plastid. It is found in the chloroplast. The catalysed reaction is RNA(n) + a ribonucleoside 5'-triphosphate = RNA(n+1) + diphosphate. Functionally, DNA-dependent RNA polymerase catalyzes the transcription of DNA into RNA using the four ribonucleoside triphosphates as substrates. The chain is DNA-directed RNA polymerase subunit beta'' from Oedogonium cardiacum (Filamentous green alga).